Here is a 797-residue protein sequence, read N- to C-terminus: Protocadherin beta-9 (797 aa).

The signal sequence occupies residues M1–A26. Topologically, residues G27–L690 are extracellular. 5 Cadherin domains span residues V35–F133, M138–F242, Y247–L347, L352–F451, and Y456–V561. N169 carries N-linked (GlcNAc...) asparagine glycosylation. An N-linked (GlcNAc...) asparagine glycan is attached at N418. N567 carries an N-linked (GlcNAc...) asparagine glycan. Positions G568–L671 constitute a Cadherin 6 domain. The helical transmembrane segment at V691 to V711 threads the bilayer. Topologically, residues R712–Y797 are cytoplasmic. Residues H777 to Y797 are disordered. Polar residues predominate over residues N786 to Y797.

It is found in the cell membrane. Functionally, potential calcium-dependent cell-adhesion protein. May be involved in the establishment and maintenance of specific neuronal connections in the brain. The protein is Protocadherin beta-9 (PCDHB9) of Homo sapiens (Human).